Here is a 352-residue protein sequence, read N- to C-terminus: MVFRIASSPYTHNQRQTSRIMLLVLIAALPGIAAQTWFFGWGTLFQIVLAAITALVAEAIVLRLRKQSVASHLQDYSALLTGLLLAVSIPPLAPWWIVVLGTGFAIIIAKQLYGGLGQNPFNPAMIGYVVLLISFPVQMTSWLPPYEIAATTPDILDTLRMIFSGHTASGGDMTLLRTGIDGISQATPLDTFKTSLRAGHSVEQIMQYPIYSGALAGVGWQWVNLAWLVGGVFLLWQKAIRWHIPVSFLLTLALCAALGWLFSPATLASPQLHLLSGATMLGAFFILTDPVTASTTNRGRLIFGALAGVLVWLIRSFGGYPDGVAFAVLLANITVPLIDYYTRPRVYGHRKG.

Helical transmembrane passes span 20 to 40, 42 to 62, 69 to 91, and 123 to 143; these read IMLLVLIAALPGIAAQTWFFG, GTLFQIVLAAITALVAEAIVL, VASHLQDYSALLTGLLLAVSIPP, and PAMIGYVVLLISFPVQMTSWL. At T187 the chain carries FMN phosphoryl threonine. 5 helical membrane passes run 215 to 235, 242 to 262, 267 to 287, 301 to 321, and 322 to 342; these read LAGVGWQWVNLAWLVGGVFLL, WHIPVSFLLTLALCAALGWLF, LASPQLHLLSGATMLGAFFIL, LIFGALAGVLVWLIRSFGGYP, and DGVAFAVLLANITVPLIDYYT.

It belongs to the NqrB/RnfD family. The complex is composed of six subunits: RsxA, RsxB, RsxC, RsxD, RsxE and RsxG. Requires FMN as cofactor.

It is found in the cell inner membrane. Its function is as follows. Part of a membrane-bound complex that couples electron transfer with translocation of ions across the membrane. Required to maintain the reduced state of SoxR. In Salmonella paratyphi A (strain ATCC 9150 / SARB42), this protein is Ion-translocating oxidoreductase complex subunit D.